We begin with the raw amino-acid sequence, 242 residues long: Type III pantothenate kinase (242 aa).

7–14 (DNSNTRTK) provides a ligand contact to ATP. Substrate is bound by residues Tyr88 and 95-98 (GADR). Residue Asp97 is the Proton acceptor of the active site. A K(+)-binding site is contributed by Asp117. Thr120 is a binding site for ATP. Position 172 (Thr172) interacts with substrate.

Belongs to the type III pantothenate kinase family. In terms of assembly, homodimer. NH4(+) serves as cofactor. K(+) is required as a cofactor.

Its subcellular location is the cytoplasm. It carries out the reaction (R)-pantothenate + ATP = (R)-4'-phosphopantothenate + ADP + H(+). Its pathway is cofactor biosynthesis; coenzyme A biosynthesis; CoA from (R)-pantothenate: step 1/5. Functionally, catalyzes the phosphorylation of pantothenate (Pan), the first step in CoA biosynthesis. The sequence is that of Type III pantothenate kinase from Akkermansia muciniphila (strain ATCC BAA-835 / DSM 22959 / JCM 33894 / BCRC 81048 / CCUG 64013 / CIP 107961 / Muc).